A 352-amino-acid polypeptide reads, in one-letter code: Fe(3+) ions import ATP-binding protein FbpC (352 aa).

The ABC transporter domain maps to leucine 5–isoleucine 239. Residue glycine 37–threonine 44 coordinates ATP.

Belongs to the ABC transporter superfamily. Fe(3+) ion importer (TC 3.A.1.10) family. As to quaternary structure, the complex is composed of two ATP-binding proteins (FbpC), two transmembrane proteins (FbpB) and a solute-binding protein (FbpA).

It localises to the cell inner membrane. It catalyses the reaction Fe(3+)(out) + ATP + H2O = Fe(3+)(in) + ADP + phosphate + H(+). Its function is as follows. Part of the ABC transporter complex FbpABC involved in Fe(3+) ions import. Responsible for energy coupling to the transport system. This chain is Fe(3+) ions import ATP-binding protein FbpC, found in Neisseria meningitidis serogroup A / serotype 4A (strain DSM 15465 / Z2491).